A 157-amino-acid chain; its full sequence is Transmembrane protein 50A (157 aa).

Ser2 carries the N-acetylserine modification. Residue Ser2 is modified to Phosphoserine. 4 consecutive transmembrane segments (helical) span residues 26-46 (IAAG…AVIY), 58-78 (ACGV…NGQV), 95-115 (IWLF…MWIL), and 126-146 (IVYP…GGLV).

Belongs to the UPF0220 family.

The protein localises to the membrane. The polypeptide is Transmembrane protein 50A (TMEM50A) (Homo sapiens (Human)).